Consider the following 434-residue polypeptide: ATP-dependent protease ATPase subunit HslU (434 aa).

ATP is bound by residues valine 18, 60–65 (GVGKTE), aspartate 247, glutamate 312, and arginine 384.

Belongs to the ClpX chaperone family. HslU subfamily. A double ring-shaped homohexamer of HslV is capped on each side by a ring-shaped HslU homohexamer. The assembly of the HslU/HslV complex is dependent on binding of ATP.

Its subcellular location is the cytoplasm. In terms of biological role, ATPase subunit of a proteasome-like degradation complex; this subunit has chaperone activity. The binding of ATP and its subsequent hydrolysis by HslU are essential for unfolding of protein substrates subsequently hydrolyzed by HslV. HslU recognizes the N-terminal part of its protein substrates and unfolds these before they are guided to HslV for hydrolysis. The polypeptide is ATP-dependent protease ATPase subunit HslU (Hyphomonas neptunium (strain ATCC 15444)).